Reading from the N-terminus, the 820-residue chain is Leucine--tRNA ligase (820 aa).

Residues 42 to 52 carry the 'HIGH' region motif; sequence PYPSGDLHMGH. A 'KMSKS' region motif is present at residues 576–580; that stretch reads KMSKS. K579 lines the ATP pocket.

The protein belongs to the class-I aminoacyl-tRNA synthetase family.

The protein resides in the cytoplasm. It carries out the reaction tRNA(Leu) + L-leucine + ATP = L-leucyl-tRNA(Leu) + AMP + diphosphate. The chain is Leucine--tRNA ligase from Coxiella burnetii (strain RSA 331 / Henzerling II).